The following is a 334-amino-acid chain: Tryptophan--tRNA ligase (334 aa).

Residues 11–13 (QPT) and 19–20 (GN) each bind ATP. Positions 12–20 (PTGKLTIGN) match the 'HIGH' region motif. Residue D135 coordinates L-tryptophan. ATP is bound by residues 147 to 149 (GED), I186, and 195 to 199 (KMSKS). The short motif at 195–199 (KMSKS) is the 'KMSKS' region element.

This sequence belongs to the class-I aminoacyl-tRNA synthetase family. As to quaternary structure, homodimer.

It is found in the cytoplasm. It catalyses the reaction tRNA(Trp) + L-tryptophan + ATP = L-tryptophyl-tRNA(Trp) + AMP + diphosphate + H(+). Functionally, catalyzes the attachment of tryptophan to tRNA(Trp). The protein is Tryptophan--tRNA ligase of Blochmanniella floridana.